A 205-amino-acid polypeptide reads, in one-letter code: CASP-like protein 2A1 (205 aa).

Topologically, residues 1–35 (MMGDKGEKECATASSPIELGCGEGDESGNKSSMRT) are cytoplasmic. The chain crosses the membrane as a helical span at residues 36–56 (VETLLRLVPVALCTVSLVVML). Residues 57–77 (KNSQTNDFGSLSYSDLGAFRY) are Extracellular-facing. The helical transmembrane segment at 78 to 98 (LVHANGICAGYSLLSAIFTAM) threads the bilayer. At 99-106 (PRPPTMSR) the chain is on the cytoplasmic side. Residues 107-127 (AWTFFLLDQVLTYLILAAGAV) form a helical membrane-spanning segment. Residues 128-157 (STEVVYLAYKGDEAVTWSDACSSFGGFCQK) are Extracellular-facing. Residues 158-178 (TTASISITFVTVLCYAVLSLI) form a helical membrane-spanning segment. At 179-205 (SSYKLFSKYDAPICFNGKGIEIAAFHS) the chain is on the cytoplasmic side.

Belongs to the Casparian strip membrane proteins (CASP) family. In terms of assembly, homodimer and heterodimers.

The protein resides in the cell membrane. The sequence is that of CASP-like protein 2A1 from Vitis vinifera (Grape).